The primary structure comprises 483 residues: Glycogen synthase (483 aa).

Lys-18 provides a ligand contact to ADP-alpha-D-glucose.

Belongs to the glycosyltransferase 1 family. Bacterial/plant glycogen synthase subfamily.

The catalysed reaction is [(1-&gt;4)-alpha-D-glucosyl](n) + ADP-alpha-D-glucose = [(1-&gt;4)-alpha-D-glucosyl](n+1) + ADP + H(+). Its pathway is glycan biosynthesis; glycogen biosynthesis. Functionally, synthesizes alpha-1,4-glucan chains using ADP-glucose. The chain is Glycogen synthase from Rhodopseudomonas palustris (strain TIE-1).